The primary structure comprises 206 residues: Large ribosomal subunit protein uL4 (206 aa).

Residues 51–76 are disordered; it reads AKTRAEVSGGGIKPWRQKGTGRARQG.

The protein belongs to the universal ribosomal protein uL4 family. Part of the 50S ribosomal subunit.

Its function is as follows. One of the primary rRNA binding proteins, this protein initially binds near the 5'-end of the 23S rRNA. It is important during the early stages of 50S assembly. It makes multiple contacts with different domains of the 23S rRNA in the assembled 50S subunit and ribosome. Forms part of the polypeptide exit tunnel. The protein is Large ribosomal subunit protein uL4 of Clostridium kluyveri (strain ATCC 8527 / DSM 555 / NBRC 12016 / NCIMB 10680 / K1).